The primary structure comprises 381 residues: Queuine tRNA-ribosyltransferase (381 aa).

The Proton acceptor role is filled by Asp92. Residues 92–96 (DSGGF), Asp146, Gln190, and Gly217 each bind substrate. The tract at residues 248 to 254 (GVGRPED) is RNA binding. Catalysis depends on Asp267, which acts as the Nucleophile. An RNA binding; important for wobble base 34 recognition region spans residues 272-276 (TRNAR). Positions 305, 307, 310, and 337 each coordinate Zn(2+).

It belongs to the queuine tRNA-ribosyltransferase family. In terms of assembly, homodimer. Within each dimer, one monomer is responsible for RNA recognition and catalysis, while the other monomer binds to the replacement base PreQ1. Requires Zn(2+) as cofactor.

It carries out the reaction 7-aminomethyl-7-carbaguanine + guanosine(34) in tRNA = 7-aminomethyl-7-carbaguanosine(34) in tRNA + guanine. Its pathway is tRNA modification; tRNA-queuosine biosynthesis. Its function is as follows. Catalyzes the base-exchange of a guanine (G) residue with the queuine precursor 7-aminomethyl-7-deazaguanine (PreQ1) at position 34 (anticodon wobble position) in tRNAs with GU(N) anticodons (tRNA-Asp, -Asn, -His and -Tyr). Catalysis occurs through a double-displacement mechanism. The nucleophile active site attacks the C1' of nucleotide 34 to detach the guanine base from the RNA, forming a covalent enzyme-RNA intermediate. The proton acceptor active site deprotonates the incoming PreQ1, allowing a nucleophilic attack on the C1' of the ribose to form the product. After dissociation, two additional enzymatic reactions on the tRNA convert PreQ1 to queuine (Q), resulting in the hypermodified nucleoside queuosine (7-(((4,5-cis-dihydroxy-2-cyclopenten-1-yl)amino)methyl)-7-deazaguanosine). The polypeptide is Queuine tRNA-ribosyltransferase (Xanthomonas axonopodis pv. citri (strain 306)).